Reading from the N-terminus, the 332-residue chain is Melanocortin receptor 4 (332 aa).

Topologically, residues 1–43 (MNSTQPLGMHTSLHSWNRSAHGMPTNVSESLAKGYSDGGCYEQ) are extracellular. Residues Asn2, Asn17, and Asn26 are each glycosylated (N-linked (GlcNAc...) asparagine). 2 disulfides stabilise this stretch: Cys40–Cys279 and Cys271–Cys277. The helical transmembrane segment at 44–69 (LFVSPEVFVTLGVISLLENILVIVAI) threads the bilayer. The Cytoplasmic segment spans residues 70 to 81 (AKNKNLHSPMYF). The helical transmembrane segment at 82 to 106 (FICSLAVADMLVSVSNGSETIVITL) threads the bilayer. Residues Glu100, Asp122, and Asp126 each contribute to the Ca(2+) site. Residues 107 to 123 (LNSTDTDAQSFTVDIDN) are Extracellular-facing. The chain crosses the membrane as a helical span at residues 124–145 (VIDSVICSSLLASICSLLSIAV). The Cytoplasmic portion of the chain corresponds to 146–165 (DRYFTIFYALQYHNIMTVKR). The chain crosses the membrane as a helical span at residues 166–186 (VAITISAIWAACTVSGVLFII). Topologically, residues 187–191 (YSDSS) are extracellular. Residues 192–215 (AVIICLITVFFTMLALMASLYVHM) traverse the membrane as a helical segment. Residues 216–248 (FLMARLHIKRIAVLPGSGTIRQGANMKGAITLT) are Cytoplasmic-facing. The chain crosses the membrane as a helical span at residues 249 to 271 (ILIGVFVVCWAPFFLHLIFYISC). At 272 to 280 (PQNPYCVCF) the chain is on the extracellular side. The chain crosses the membrane as a helical span at residues 281–304 (MSHFNLYLILIMCNSIIDPLIYAL). Over 305-332 (RSQELRKTFKEIICCSPLGGLCDLSSRY) the chain is Cytoplasmic. Cys318 is lipidated: S-palmitoyl cysteine.

The protein belongs to the G-protein coupled receptor 1 family. As to quaternary structure, homodimer; disulfide-linked, also forms higher order oligomers. Interacts with GNAS. Interacts with ATRNL1. Interacts with MGRN1; this interaction competes with GNAS-binding and thus inhibits agonist-induced cAMP production. Interacts with MRAP and MRAP2; these associated factors increase ligand-sensitivity and generation of cAMP.

The protein resides in the cell membrane. In terms of biological role, hormone receptor that acts as a key component of the leptin-melanocortin pathway at the intersection of homeostatic maintenance of energetic state. Plays a role in regulating food intake: activation by a stimulating hormone such as anorexigenic alpha-melanocyte stimulating hormone (alpha-MSH) inhibits appetite, whereas binding to a natural antagonist like Agouti-related protein/AGRP promotes appetite. G-protein-coupled receptor that activates conventional Galphas signaling leading to induction of anorexogenic signaling in the hypothalamus to result in negative energy balance. Regulates the firing activity of neurons from the hypothalamus by alpha-MSH and AGRP independently of Galphas signaling by ligand-induced coupling of closure of inwardly rectifying potassium channel KCNJ13. In intestinal epithelial cells, plays a role in the inhibition of hepatic glucose production via nesfatin-1/NUCB2 leading to increased cyclic adenosine monophosphate (cAMP) levels and glucagon-like peptide 1 (GLP-1) secretion in the intestinal epithelium. The polypeptide is Melanocortin receptor 4 (MC4R) (Bos taurus (Bovine)).